Reading from the N-terminus, the 452-residue chain is Prenyltransferase fsdK (452 aa).

The protein belongs to the tryptophan dimethylallyltransferase family.

It participates in mycotoxin biosynthesis. Prenyltransferase; part of the gene cluster that mediates the biosynthesis of fusaridione A, a bright yellow trans-fused decalin-containing tetramic acid with antimicrobial activity. The PKS module of fsdS catalyzes the formation of the polyketide unit which is then conjugated to L-tyrosine by the condensation domain of the fsdS NRPS module. Activity of the Dieckmann cyclase domain (RED) results in release of the intermediate fusaridione A. The unstable pyrrolidinedione ring of fusaridione A is opened through a reverse-Dieckmann reaction to afford its ring-opened form. The chain is Prenyltransferase fsdK from Fusarium heterosporum.